The following is a 1094-amino-acid chain: Protein transport protein Sec24C (1094 aa).

The disordered stretch occupies residues 1-338 (MNVNQSVPPV…PIQVIEDDRN (338 aa)). Pro residues predominate over residues 8–19 (PPVPPFGQPQPI). Low complexity-rich tracts occupy residues 20 to 29 (YPGYHQSSYG) and 60 to 77 (SRAP…AQAP). Residues 90–101 (DVQNGPSSTVQM) are compositionally biased toward polar residues. The segment covering 123–132 (VLQPYGPPPT) has biased composition (pro residues). Composition is skewed to polar residues over residues 133 to 144 (SAQVATQLSGMQ), 165 to 175 (SLASASGSFPN), 189 to 215 (PLSQ…SFTP), and 240 to 251 (SVSQPNHVSSPP). Thr214 is modified (phosphothreonine). A compositionally biased stretch (low complexity) spans 273 to 282 (PQQPGYQPQQ). Zn(2+) is bound by residues Cys425, Cys428, Cys447, and Cys450. Positions 425–450 (CNRCKAYMCPFMQFIEGGRRFQCCFC) are zinc finger-like. Residues 962–1034 (TTEPPAVRAS…DNPLSKKVRG (73 aa)) form a Gelsolin-like repeat.

The protein belongs to the SEC23/SEC24 family. SEC24 subfamily. COPII is composed of at least five proteins: the Sec23/24 complex, the Sec13/31 complex and Sar1. Interacts with TMED2 and TMED10. Interacts with GOSR2 (via IxM motif) and STX5 (via IxM motif); recruits GOSR2 and STX5 into COPII-coated vesicles. Interacts with DDHD1. Interacts with STING1; promoting STING1 translocation to the COPII vesicles. As to expression, ubiquitous.

It localises to the cytoplasmic vesicle. It is found in the COPII-coated vesicle membrane. Its subcellular location is the endoplasmic reticulum membrane. The protein localises to the cytoplasm. The protein resides in the cytosol. In terms of biological role, component of the coat protein complex II (COPII) which promotes the formation of transport vesicles from the endoplasmic reticulum (ER). The coat has two main functions, the physical deformation of the endoplasmic reticulum membrane into vesicles and the selection of cargo molecules for their transport to the Golgi complex. Plays a central role in cargo selection within the COPII complex and together with SEC24D may have a different specificity compared to SEC24A and SEC24B. May more specifically package GPI-anchored proteins through the cargo receptor TMED10. May also be specific for IxM motif-containing cargos like the SNAREs GOSR2 and STX5. The polypeptide is Protein transport protein Sec24C (Homo sapiens (Human)).